Reading from the N-terminus, the 188-residue chain is ATP-dependent protease subunit HslV (188 aa).

The active site involves T8. Residues A165, C168, and T171 each coordinate Na(+).

Belongs to the peptidase T1B family. HslV subfamily. In terms of assembly, a double ring-shaped homohexamer of HslV is capped on each side by a ring-shaped HslU homohexamer. The assembly of the HslU/HslV complex is dependent on binding of ATP.

Its subcellular location is the cytoplasm. The enzyme catalyses ATP-dependent cleavage of peptide bonds with broad specificity.. With respect to regulation, allosterically activated by HslU binding. Its function is as follows. Protease subunit of a proteasome-like degradation complex believed to be a general protein degrading machinery. The chain is ATP-dependent protease subunit HslV from Neorickettsia sennetsu (strain ATCC VR-367 / Miyayama) (Ehrlichia sennetsu).